Reading from the N-terminus, the 538-residue chain is Putative amidase kk1C (538 aa).

The tract at residues 1–32 (MTEPTWKTVASEKQQQRESKIPSEWQIPKSSH) is disordered. Catalysis depends on charge relay system residues Lys-134 and Ser-209. The Acyl-ester intermediate role is filled by Ser-233.

It belongs to the amidase family.

The catalysed reaction is a monocarboxylic acid amide + H2O = a monocarboxylate + NH4(+). It functions in the pathway secondary metabolite biosynthesis. In terms of biological role, putative amidase; part of the gene cluster that mediates the biosynthesis of KK-1, a novel cyclic depsipeptide with 10 residues which is a promising active compound with high activity against many plant pathogens, especially Botrytis cinerea. The role of kk1C in KK-1 biosynthesis has still to be determined. The nonribosomal peptide synthetase (NRPS) kk1B catalyzes the elongation and cyclization of the decapeptide chain composed of 1 D-lactic acid residue (D-Lac), 1 pipecolic acid residue (Pip), 1 aspartic acid residue (Asp), 1 isoleucine residue (Ile), 1 glycine residue (Gly), 1 tyrosine residue (Tyr) and 4 valine residues (Val). The Asp, Ile and 3 Val residues are N-methylated by the 5 methyltransferase domains from the NRPS (found in modules 3, 5, 6, 7 and 9), whereas the Tyr residue is O-methylated by the cluster encoded O-methyltransferase kk1A. The thioesterase kk1J is likely to be involved in the corrective mechanism of peptide chain synthesis. The D-lactate dehydrogenase kk1H is involved in the synthesis of D-lactic acid from pyruvic acid, which is recognized by the A domain of the first kk1B module. The pyrroline-5-carboxylate reductase kk1I is involved in the synthesis of the L-pipecolic acid residue of KK-1 from delta-1-pyrroline-5-carboxylate (P5C), a metabolic intermediate of lysine. It is still unclear how kk1C and kk1D are involved in the production of KK-1. This is Putative amidase kk1C from Curvularia clavata.